The following is a 430-amino-acid chain: Protein IQ-DOMAIN 3 (430 aa).

Residues 1-36 (MGKSWFSAVKKALSPEPKQKKEQKPHKSKKWFGKSK) form a disordered region. The Nuclear localization signal 1 signature appears at 9 to 16 (VKKALSPE). Over residues 23-35 (QKPHKSKKWFGKS) the composition is skewed to basic residues. An IQ domain is found at 107–135 (EEIAAIKIQTAFRGYMARRALRALRGLVR). Positions 170-224 (RLRLSEDKQALTRQLQQKHNKDFDKTGENWNDSTLSREKVEANMLNKQVATMRRE) form a coiled coil. Residues 213 to 231 (MLNKQVATMRREKALAYAF) are calmodulin-binding. Disordered regions lie at residues 271–368 (ENHS…SQSV) and 385–430 (SNLS…TNLA). The span at 286–295 (ARSVASRAMS) shows a compositional bias: low complexity. Residues 326–340 (SEDSNSIVSFQSEQP) show a composition bias toward polar residues. The Nuclear localization signal 2 motif lies at 396–403 (AKKRLSFS).

The protein belongs to the IQD family. In terms of assembly, binds to multiple calmodulin (CaM) in the presence of Ca(2+) and CaM-like proteins.

It is found in the nucleus. It localises to the nucleolus. The protein resides in the cytoplasm. The protein localises to the cytoskeleton. Its function is as follows. May be involved in cooperative interactions with calmodulins or calmodulin-like proteins. Recruits calmodulin proteins to microtubules, thus being a potential scaffold in cellular signaling and trafficking. May associate with nucleic acids and regulate gene expression at the transcriptional or post-transcriptional level. This chain is Protein IQ-DOMAIN 3, found in Arabidopsis thaliana (Mouse-ear cress).